Here is a 188-residue protein sequence, read N- to C-terminus: Ras-related protein Rap-1 (188 aa).

Position 10–17 (10–17 (GSGGVGKS)) interacts with GTP. An Effector region motif is present at residues 32 to 40 (YDPTIEDSY). GTP is bound by residues 57-61 (DTAGT) and 116-119 (NKCD).

It belongs to the small GTPase superfamily. Ras family.

It catalyses the reaction GTP + H2O = GDP + phosphate + H(+). Functionally, required in the hypodermis for proper formation of the cuticle. The protein is Ras-related protein Rap-1 (rap-1) of Caenorhabditis elegans.